Consider the following 229-residue polypeptide: Large ribosomal subunit protein uL1 (229 aa).

This sequence belongs to the universal ribosomal protein uL1 family. Part of the 50S ribosomal subunit.

Functionally, binds directly to 23S rRNA. The L1 stalk is quite mobile in the ribosome, and is involved in E site tRNA release. Its function is as follows. Protein L1 is also a translational repressor protein, it controls the translation of the L11 operon by binding to its mRNA. This chain is Large ribosomal subunit protein uL1, found in Streptococcus pneumoniae (strain Taiwan19F-14).